The sequence spans 303 residues: Acetyl-coenzyme A carboxylase carboxyl transferase subunit beta (303 aa).

The CoA carboxyltransferase N-terminal domain maps to 25–294 (LWIKCPETGE…NDVSAKSLNG (270 aa)).

This sequence belongs to the AccD/PCCB family. Acetyl-CoA carboxylase is a heterohexamer composed of biotin carboxyl carrier protein (AccB), biotin carboxylase (AccC) and two subunits each of ACCase subunit alpha (AccA) and ACCase subunit beta (AccD).

It is found in the cytoplasm. The enzyme catalyses N(6)-carboxybiotinyl-L-lysyl-[protein] + acetyl-CoA = N(6)-biotinyl-L-lysyl-[protein] + malonyl-CoA. Its pathway is lipid metabolism; malonyl-CoA biosynthesis; malonyl-CoA from acetyl-CoA: step 1/1. In terms of biological role, component of the acetyl coenzyme A carboxylase (ACC) complex. Biotin carboxylase (BC) catalyzes the carboxylation of biotin on its carrier protein (BCCP) and then the CO(2) group is transferred by the transcarboxylase to acetyl-CoA to form malonyl-CoA. The protein is Acetyl-coenzyme A carboxylase carboxyl transferase subunit beta of Rhizobium rhizogenes (strain K84 / ATCC BAA-868) (Agrobacterium radiobacter).